A 382-amino-acid polypeptide reads, in one-letter code: Anhydro-N-acetylmuramic acid kinase (382 aa).

22 to 29 (GTSMDGVD) provides a ligand contact to ATP.

It belongs to the anhydro-N-acetylmuramic acid kinase family.

The catalysed reaction is 1,6-anhydro-N-acetyl-beta-muramate + ATP + H2O = N-acetyl-D-muramate 6-phosphate + ADP + H(+). It participates in amino-sugar metabolism; 1,6-anhydro-N-acetylmuramate degradation. The protein operates within cell wall biogenesis; peptidoglycan recycling. Functionally, catalyzes the specific phosphorylation of 1,6-anhydro-N-acetylmuramic acid (anhMurNAc) with the simultaneous cleavage of the 1,6-anhydro ring, generating MurNAc-6-P. Is required for the utilization of anhMurNAc either imported from the medium or derived from its own cell wall murein, and thus plays a role in cell wall recycling. This chain is Anhydro-N-acetylmuramic acid kinase, found in Burkholderia orbicola (strain AU 1054).